Here is an 893-residue protein sequence, read N- to C-terminus: Beta-adaptin-like protein C (893 aa).

The disordered stretch occupies residues 593–621 (TEDEDYVEGSETGYPEASGNPVDGAASPS).

This sequence belongs to the adaptor complexes large subunit family. In terms of assembly, adaptor protein complexes are heterotetramers composed of two large adaptins (beta-type subunit and alpha-type or delta-type or epsilon-type or gamma-type subunit), a medium adaptin (mu-type subunit) and a small adaptin (sigma-type subunit).

It localises to the golgi apparatus. The protein resides in the trans-Golgi network. It is found in the cytoplasmic vesicle. Its subcellular location is the clathrin-coated vesicle membrane. Subunit of clathrin-associated adaptor protein complex that plays a role in protein sorting in the late-Golgi/trans-Golgi network (TGN) and/or endosomes. The AP complexes mediate both the recruitment of clathrin to membranes and the recognition of sorting signals within the cytosolic tails of transmembrane cargo molecules. The protein is Beta-adaptin-like protein C (BETAC-AD) of Arabidopsis thaliana (Mouse-ear cress).